We begin with the raw amino-acid sequence, 153 residues long: Arachidonate 5-lipoxygenase-activating protein (153 aa).

At 1–8 (MDQETVGN) the chain is on the lumenal side. Residues 9 to 30 (VVLLAIVTLISVIQNGFFAHKV) traverse the membrane as a helical segment. The Cytoplasmic portion of the chain corresponds to 31–52 (EHESKTQNGRSFQRTGTLAFER). Residues 53-77 (VYTANQNCVDAYPTFLVMLWSAGLL) traverse the membrane as a helical segment. The Lumenal segment spans residues 78 to 80 (CSQ). Residues 81 to 102 (VPAAFAGLMYLFVRQKYFVGYL) traverse the membrane as a helical segment. Over 103–107 (GERRQ) the chain is Cytoplasmic. Residues 108-115 (STPGYIFG) lie within the membrane without spanning it. The helical transmembrane segment at 116–128 (KRIILFLFLMSLA) threads the bilayer. Over 129–153 (GIFNYYLILFFGSDFENYIKTITTT) the chain is Lumenal.

The protein belongs to the MAPEG family. As to quaternary structure, homotrimer. Interacts with LTC4S and ALOX5.

Its subcellular location is the nucleus membrane. The protein resides in the endoplasmic reticulum membrane. Required for leukotriene biosynthesis by ALOX5 (5-lipoxygenase). Anchors ALOX5 to the membrane. Binds arachidonic acid, and could play an essential role in the transfer of arachidonic acid to ALOX5. Binds to MK-886, a compound that blocks the biosynthesis of leukotrienes. This is Arachidonate 5-lipoxygenase-activating protein (ALOX5AP) from Equus caballus (Horse).